Consider the following 351-residue polypeptide: Methionine import ATP-binding protein MetN (351 aa).

Residues 2–238 form the ABC transporter domain; sequence IKLNHINKTY…PKHPITRELI (237 aa). 35–42 lines the ATP pocket; that stretch reads GYSGAGKS.

This sequence belongs to the ABC transporter superfamily. Methionine importer (TC 3.A.1.24) family. The complex is composed of two ATP-binding proteins (MetN), two transmembrane proteins (MetI) and a solute-binding protein (MetQ).

It localises to the cell inner membrane. The enzyme catalyses L-methionine(out) + ATP + H2O = L-methionine(in) + ADP + phosphate + H(+). It catalyses the reaction D-methionine(out) + ATP + H2O = D-methionine(in) + ADP + phosphate + H(+). Part of the ABC transporter complex MetNIQ involved in methionine import. Responsible for energy coupling to the transport system. The polypeptide is Methionine import ATP-binding protein MetN (Helicobacter hepaticus (strain ATCC 51449 / 3B1)).